The primary structure comprises 91 residues: Acylphosphatase (91 aa).

The Acylphosphatase-like domain maps to 4 to 91 (RAIVTIKGLV…GEFDDFDVRY (88 aa)). Catalysis depends on residues R19 and N37.

It belongs to the acylphosphatase family.

It carries out the reaction an acyl phosphate + H2O = a carboxylate + phosphate + H(+). The chain is Acylphosphatase (acyP) from Geobacter sulfurreducens (strain ATCC 51573 / DSM 12127 / PCA).